A 218-amino-acid chain; its full sequence is Ras-related protein Rab-11B (218 aa).

Position 2 is an N-acetylglycine (glycine 2). Arginine 4 bears the Citrulline mark. Serine 20, glycine 21, glycine 23, lysine 24, serine 25, asparagine 26, asparagine 37, leucine 38, serine 40, serine 42, and threonine 43 together coordinate GTP. Serine 25 lines the Mg(2+) pocket. The Switch 1 signature appears at phenylalanine 36–glutamate 47. 2 residues coordinate Mg(2+): threonine 43 and aspartate 66. The short motif at threonine 67–glycine 86 is the Switch 2 element. The GTP site is built by glycine 69, asparagine 124, lysine 125, aspartate 127, alanine 155, and leucine 156. Residues arginine 184–leucine 218 form a disordered region. 2 S-geranylgeranyl cysteine lipidation sites follow: cysteine 214 and cysteine 215. Cysteine 215 carries the post-translational modification Cysteine methyl ester. Residues glutamine 216–leucine 218 constitute a propeptide, removed in mature form.

This sequence belongs to the small GTPase superfamily. Rab family. In terms of assembly, interacts with KCNMA1. Interacts with RAB11FIP1, RAB11FIP2, RAB11FIP3 and RAB11FIP4. May interact with TBC1D14. Interacts with ATP6V1E1. Interacts with PI4KB. Interacts (GDP-bound form) with ZFYVE27. Interacts (GDP-bound form) with KIF5A in a ZFYVE27-dependent manner. Interacts with RELCH. Interacts (in GTP-bound form) with TBC1D8B (via domain Rab-GAP TBC). Forms a complex containing RAB11B, ASAP1, Rabin8/RAB3IP, RAP11FIP3 and ARF4. Interacts with WDR44. The cofactor is Mg(2+). Citrullinated by PADI4. Post-translationally, (Microbial infection) Glycosylated on arginine residues by S.typhimurium protein Ssek3.

It is found in the recycling endosome membrane. Its subcellular location is the cytoplasmic vesicle. The protein localises to the secretory vesicle. It localises to the synaptic vesicle membrane. The protein resides in the phagosome membrane. The enzyme catalyses GTP + H2O = GDP + phosphate + H(+). Regulated by guanine nucleotide exchange factors (GEFs) which promote the exchange of bound GDP for free GTP. Regulated by GTPase activating proteins (GAPs) which increase the GTP hydrolysis activity. Inhibited by GDP dissociation inhibitors (GDIs) which prevent Rab-GDP dissociation. Functionally, the small GTPases Rab are key regulators of intracellular membrane trafficking, from the formation of transport vesicles to their fusion with membranes. Rabs cycle between an inactive GDP-bound form and an active GTP-bound form that is able to recruit to membranes different set of downstream effectors directly responsible for vesicle formation, movement, tethering and fusion. The small Rab GTPase RAB11B plays a role in endocytic recycling, regulating apical recycling of several transmembrane proteins including cystic fibrosis transmembrane conductance regulator/CFTR, epithelial sodium channel/ENaC, potassium voltage-gated channel, and voltage-dependent L-type calcium channel. May also regulate constitutive and regulated secretion, like insulin granule exocytosis. Required for melanosome transport and release from melanocytes. Also regulates V-ATPase intracellular transport in response to extracellular acidosis. Promotes Rabin8/RAB3IP preciliary vesicular trafficking to mother centriole by forming a ciliary targeting complex containing Rab11, ASAP1, Rabin8/RAB3IP, RAB11FIP3 and ARF4, thereby regulating ciliogenesis initiation. On the contrary, upon LPAR1 receptor signaling pathway activation, interaction with phosphorylated WDR44 prevents Rab11-RAB3IP-RAB11FIP3 complex formation and cilia growth. In Homo sapiens (Human), this protein is Ras-related protein Rab-11B.